The following is a 197-amino-acid chain: Dephospho-CoA kinase (197 aa).

The DPCK domain occupies Arg-4–Ala-197. Gly-12–Thr-17 serves as a coordination point for ATP.

It belongs to the CoaE family.

It localises to the cytoplasm. The catalysed reaction is 3'-dephospho-CoA + ATP = ADP + CoA + H(+). It functions in the pathway cofactor biosynthesis; coenzyme A biosynthesis; CoA from (R)-pantothenate: step 5/5. Functionally, catalyzes the phosphorylation of the 3'-hydroxyl group of dephosphocoenzyme A to form coenzyme A. This chain is Dephospho-CoA kinase, found in Ruegeria pomeroyi (strain ATCC 700808 / DSM 15171 / DSS-3) (Silicibacter pomeroyi).